Here is a 495-residue protein sequence, read N- to C-terminus: Ectonucleoside triphosphate diphosphohydrolase 2 (495 aa).

Residues 1–4 are Cytoplasmic-facing; the sequence is MAGK. A helical transmembrane segment spans residues 5–25; it reads LVSLVPPLLLAAAGLTGLLLL. The Extracellular portion of the chain corresponds to 26–462; the sequence is CVPTQDVREP…PGLRKGTHFS (437 aa). Asn64 carries an N-linked (GlcNAc...) asparagine glycan. An intrachain disulfide couples Cys75 to Cys99. Residue Asn129 is glycosylated (N-linked (GlcNAc...) asparagine). The active-site Proton acceptor is Glu165. 204–208 contributes to the ATP binding site; it reads GASTQ. 2 cysteine pairs are disulfide-bonded: Cys242/Cys284 and Cys265/Cys310. Residues Asn294, Asn306, and Asn319 are each glycosylated (N-linked (GlcNAc...) asparagine). Cystine bridges form between Cys323/Cys328 and Cys377/Cys399. Residues Asn378 and Asn443 are each glycosylated (N-linked (GlcNAc...) asparagine). Residues 463–483 traverse the membrane as a helical segment; the sequence is SWVALLLLFTVLILAALVLLL. At 484–495 the chain is on the cytoplasmic side; it reads RQVRSAKSPGAL.

This sequence belongs to the GDA1/CD39 NTPase family. The cofactor is Ca(2+). Requires Mg(2+) as cofactor. Expressed in brain, heart, vas deferens, kidney, skeletal muscle, thymus, lung and spleen. Weak expression in liver.

It localises to the cell membrane. Its function is as follows. In the nervous system, could hydrolyze ATP and other nucleotides to regulate purinergic neurotransmission. Hydrolyzes ADP only to a marginal extent. The polypeptide is Ectonucleoside triphosphate diphosphohydrolase 2 (Entpd2) (Rattus norvegicus (Rat)).